A 179-amino-acid chain; its full sequence is MARFQEFYKEKVVPGLIEKFGYKSVMEVPRITKITLNMGLGEAVADKKIIENAVGDLTKIAGQKPVVTKARKAIAGFKIRQGYPIGAMVTLRGRAMYEFLDRFVTVALPRVRDFRGVSGRAFDGRGNYNIGVKEQIIFPEIDYDKIDALRGLNISIMTTAKTDDEAKALLASFKFPFRN.

Belongs to the universal ribosomal protein uL5 family. As to quaternary structure, part of the 50S ribosomal subunit; part of the 5S rRNA/L5/L18/L25 subcomplex. Contacts the 5S rRNA and the P site tRNA. Forms a bridge to the 30S subunit in the 70S ribosome.

Its function is as follows. This is one of the proteins that bind and probably mediate the attachment of the 5S RNA into the large ribosomal subunit, where it forms part of the central protuberance. In the 70S ribosome it contacts protein S13 of the 30S subunit (bridge B1b), connecting the 2 subunits; this bridge is implicated in subunit movement. Contacts the P site tRNA; the 5S rRNA and some of its associated proteins might help stabilize positioning of ribosome-bound tRNAs. The protein is Large ribosomal subunit protein uL5 of Burkholderia mallei (strain ATCC 23344).